A 758-amino-acid polypeptide reads, in one-letter code: Dachshund homolog 1 (758 aa).

Disordered stretches follow at residues 1–105 (MAVP…SNCN) and 134–185 (INAS…TPQN). Residues 20–53 (ISTSASSSGTTTSTSSATSSPAPSIGPPASSGPT) are compositionally biased toward low complexity. The span at 73 to 102 (TGGGGGGGGSGGGGGSSGNGGGGGGGGGGS) shows a compositional bias: gly residues. A compositionally biased stretch (low complexity) spans 140–163 (SSSSSSSSSSSSSSSSSSSSSSSS). A compositionally biased stretch (polar residues) spans 174 to 185 (STPSPVENTPQN). The tract at residues 189-275 (KMVDLRGAKV…LISRKDFETL (87 aa)) is DACHbox-N. The segment at 189–384 (KMVDLRGAKV…VGSSDGSWDK (196 aa)) is interaction with SIX6 and HDAC3. 4 disordered regions span residues 280–302 (TNAS…PENS), 358–414 (SNNQ…PLSH), 474–532 (SPPS…RIPV), and 544–564 (MGLS…GHDM). Polar residues-rich tracts occupy residues 292–301 (RTQSVTSPEN), 358–380 (SNNQ…SSDG), and 387–399 (LPSS…QASI). Residue Ser491 is modified to Phosphoserine. Residues 506-524 (SHPSSHRSSSVSSSPARTE) are compositionally biased toward low complexity. Positions 555–564 (KEGDLAGHDM) are enriched in basic and acidic residues. The tract at residues 616–696 (SSIETLLTNI…KAKRKLQEAL (81 aa)) is DACHbox-C. An interaction with SIN3A region spans residues 627–706 (GLLKVAIDNA…EFETKRREQA (80 aa)). Residues 630-718 (KVAIDNARAQ…TLKQAASTDS (89 aa)) are a coiled coil.

This sequence belongs to the DACH/dachshund family. As to quaternary structure, interacts with SIX1, SIX6 and EYA3. Interacts with NCOR1 and HDAC3 through its N-terminus. Interacts with SIN3A through its C-terminus. Interacts with SMAD3 and SMAD4. In terms of tissue distribution, widely expressed. Isoform 2 is found in brain, heart, kidney, liver, leukocytes and spleen. Isoform 3 is found in liver and heart. Isoform 4 is found in spleen.

The protein localises to the nucleus. Transcription factor that is involved in regulation of organogenesis. Seems to be a regulator of SIX1, SIX6 and probably SIX5. Corepression of precursor cell proliferation in myoblasts by SIX1 is switched to coactivation through recruitment of EYA3 to the SIX1-DACH1 complex. Transcriptional activation also seems to involve association of CREBBP. Seems to act as a corepressor of SIX6 in regulating proliferation by directly repressing cyclin-dependent kinase inhibitors, including the p27Kip1 promoter. Inhibits TGF-beta signaling through interaction with SMAD4 and NCOR1. Binds to chromatin DNA via its DACHbox-N domain. The chain is Dachshund homolog 1 (DACH1) from Homo sapiens (Human).